Consider the following 301-residue polypeptide: Probable alpha-L-glutamate ligase (301 aa).

Residues 104–287 (LQLLSRKGVG…IAGMIIEYIE (184 aa)) enclose the ATP-grasp domain. Residues lysine 141, 178-179 (EY), aspartate 187, and 211-213 (RSN) each bind ATP. Positions 248, 260, and 262 each coordinate Mg(2+). Residues aspartate 248, glutamate 260, and asparagine 262 each contribute to the Mn(2+) site.

This sequence belongs to the RimK family. The cofactor is Mg(2+). Mn(2+) is required as a cofactor.

The polypeptide is Probable alpha-L-glutamate ligase (Photobacterium profundum (strain SS9)).